The following is a 291-amino-acid chain: Endo-1,4-beta-xylanase 11B (291 aa).

A signal peptide spans 1-19 (MVAFSSLFLGASIAATALA). One can recognise a GH11 domain in the interval 34 to 222 (TYTQSATGTH…SSGSARINVG (189 aa)). A glycan (N-linked (GlcNAc...) asparagine) is linked at Asn93. The active-site Nucleophile is the Glu118. Glu209 functions as the Proton donor in the catalytic mechanism. Residues 223 to 246 (GGSTGGGNNGGGNNGGNPGGNPGG) form a disordered region. Residues 255–291 (NCSPRWGQCGGQGWNGPTCCESGTTCRQQNQWYSQCL) enclose the CBM1 domain.

It belongs to the glycosyl hydrolase 11 (cellulase G) family.

The protein localises to the secreted. The catalysed reaction is Endohydrolysis of (1-&gt;4)-beta-D-xylosidic linkages in xylans.. It participates in glycan degradation; xylan degradation. With respect to regulation, the activity iss completely inhibited by Hg(2+), a metal ion that interacts with Trp and oxidizes the indole ring, and is significantly enhanced by beta-mercaptoethanol, which counteracts the oxidation effects of the S-S linkage between Cys residues. Functionally, endo-1,4-beta-xylanase involved in the hydrolysis of xylan, a major structural heterogeneous polysaccharide found in plant biomass representing the second most abundant polysaccharide in the biosphere, after cellulose. Shows maximum activity on soluble wheat arabinoxylan (defined as 100%), moderate activity on birchwood xylan (80.5%) and beechwood xylan (76.2%), and weak activity on insoluble wheat arabinoxylan (7.0%). Has no activity towards glucan or carboxymethyl cellulose-sodium (CMC-Na). This is Endo-1,4-beta-xylanase 11B from Humicola insolens (Soft-rot fungus).